We begin with the raw amino-acid sequence, 464 residues long: Argininosuccinate lyase (464 aa).

The protein belongs to the lyase 1 family. Argininosuccinate lyase subfamily.

It is found in the cytoplasm. It carries out the reaction 2-(N(omega)-L-arginino)succinate = fumarate + L-arginine. The protein operates within amino-acid biosynthesis; L-arginine biosynthesis; L-arginine from L-ornithine and carbamoyl phosphate: step 3/3. The polypeptide is Argininosuccinate lyase (Chlorobium phaeobacteroides (strain DSM 266 / SMG 266 / 2430)).